Consider the following 109-residue polypeptide: Small ribosomal subunit protein uS17 (109 aa).

It belongs to the universal ribosomal protein uS17 family. Part of the 30S ribosomal subunit.

Its function is as follows. One of the primary rRNA binding proteins, it binds specifically to the 5'-end of 16S ribosomal RNA. This chain is Small ribosomal subunit protein uS17, found in Halobacterium salinarum (strain ATCC 29341 / DSM 671 / R1).